The sequence spans 122 residues: Small ribosomal subunit protein uS13 (122 aa).

Residues 93-122 (RRGLPVRGQRTKTNARTRKGPKKTIAGKKK) form a disordered region.

It belongs to the universal ribosomal protein uS13 family. Part of the 30S ribosomal subunit. Forms a loose heterodimer with protein S19. Forms two bridges to the 50S subunit in the 70S ribosome.

Its function is as follows. Located at the top of the head of the 30S subunit, it contacts several helices of the 16S rRNA. In the 70S ribosome it contacts the 23S rRNA (bridge B1a) and protein L5 of the 50S subunit (bridge B1b), connecting the 2 subunits; these bridges are implicated in subunit movement. Contacts the tRNAs in the A and P-sites. This Corynebacterium efficiens (strain DSM 44549 / YS-314 / AJ 12310 / JCM 11189 / NBRC 100395) protein is Small ribosomal subunit protein uS13.